A 454-amino-acid chain; its full sequence is Guanine deaminase (454 aa).

Residues His-82 and His-84 each contribute to the Zn(2+) site. Substrate-binding positions include 84–87 (HAPQ), 213–214 (RF), 240–243 (HISE), and Asp-330. The Zn(2+) site is built by His-240 and Asp-330. Ser-453 carries the phosphoserine modification.

The protein belongs to the metallo-dependent hydrolases superfamily. ATZ/TRZ family. In terms of assembly, homodimer. Zn(2+) is required as a cofactor.

The enzyme catalyses guanine + H2O + H(+) = xanthine + NH4(+). It functions in the pathway purine metabolism; guanine degradation; xanthine from guanine: step 1/1. Catalyzes the hydrolytic deamination of guanine, producing xanthine and ammonia. The polypeptide is Guanine deaminase (Mus musculus (Mouse)).